A 258-amino-acid chain; its full sequence is Octanoyltransferase (258 aa).

One can recognise a BPL/LPL catalytic domain in the interval 42 to 226 (NLGADTLLLL…AVVAALDGAL (185 aa)). Residues 80 to 87 (RGGKITWH), 156 to 158 (AIG), and 169 to 171 (GFS) each bind substrate. C187 serves as the catalytic Acyl-thioester intermediate.

This sequence belongs to the LipB family.

It localises to the cytoplasm. It carries out the reaction octanoyl-[ACP] + L-lysyl-[protein] = N(6)-octanoyl-L-lysyl-[protein] + holo-[ACP] + H(+). The protein operates within protein modification; protein lipoylation via endogenous pathway; protein N(6)-(lipoyl)lysine from octanoyl-[acyl-carrier-protein]: step 1/2. Its function is as follows. Catalyzes the transfer of endogenously produced octanoic acid from octanoyl-acyl-carrier-protein onto the lipoyl domains of lipoate-dependent enzymes. Lipoyl-ACP can also act as a substrate although octanoyl-ACP is likely to be the physiological substrate. This Rhodococcus opacus (strain B4) protein is Octanoyltransferase.